We begin with the raw amino-acid sequence, 307 residues long: Pseudouridine-5'-phosphate glycosidase (307 aa).

Glutamate 28 (proton donor) is an active-site residue. Residues lysine 89 and valine 109 each coordinate substrate. Aspartate 141 is a Mn(2+) binding site. 143–145 (SAD) lines the substrate pocket. Lysine 162 functions as the Nucleophile in the catalytic mechanism.

The protein belongs to the pseudouridine-5'-phosphate glycosidase family. Homotrimer. It depends on Mn(2+) as a cofactor.

It catalyses the reaction D-ribose 5-phosphate + uracil = psi-UMP + H2O. Functionally, catalyzes the reversible cleavage of pseudouridine 5'-phosphate (PsiMP) to ribose 5-phosphate and uracil. Functions biologically in the cleavage direction, as part of a pseudouridine degradation pathway. The protein is Pseudouridine-5'-phosphate glycosidase of Nocardioides sp. (strain ATCC BAA-499 / JS614).